Consider the following 1861-residue polypeptide: Polyketide synthase 2 (1861 aa).

The region spanning 109-525 is the Ketosynthase family 3 (KS3) domain; it reads DSKIAIIGMS…GGNSALLLED (417 aa). Residues cysteine 264, histidine 399, and histidine 441 each act as for beta-ketoacyl synthase activity in the active site. A malonyl-CoA:ACP transacylase (MAT) domain region spans residues 626-931; the sequence is GFVFSGQGAQ…PSLHRKDDGW (306 aa). Residue serine 716 is the For acyl/malonyl transferase activity of the active site. Residues 1008 to 1312 form a product template (PT) domain region; it reads TSSVQKVIQQ…VFGGMTVLPP (305 aa). Residues 1012-1146 form an N-terminal hotdog fold region; sequence QKVIQQTDGP…CILRFADPKS (135 aa). The 307-residue stretch at 1012-1318 folds into the PKS/mFAS DH domain; sequence QKVIQQTDGP…VLPPRRGADA (307 aa). Histidine 1045 functions as the Proton acceptor; for dehydratase activity in the catalytic mechanism. Residues 1174-1318 form a C-terminal hotdog fold region; that stretch reads DSLLSKGIVY…VLPPRRGADA (145 aa). Aspartate 1232 serves as the catalytic Proton donor; for dehydratase activity. Residues 1356 to 1433 form the Carrier 1 domain; sequence SPQSGAIHRI…ELRLFLAADQ (78 aa). The residue at position 1393 (serine 1393) is an O-(pantetheine 4'-phosphoryl)serine. The segment at 1441–1470 is disordered; sequence CESSNGQHTPQTSDKGSGTLTAQKPDHDTD. Residues 1442 to 1462 are compositionally biased toward polar residues; it reads ESSNGQHTPQTSDKGSGTLTA. Positions 1472–1546 constitute a Carrier 2 domain; the sequence is EMTLNRVCAI…SLQKTLRGTE (75 aa). Serine 1506 is modified (O-(pantetheine 4'-phosphoryl)serine). The thioesterase (TE) domain stretch occupies residues 1582–1855; it reads ASAPHATSIL…IIEMSNLIGD (274 aa). Serine 1685 (for thioesterase activity) is an active-site residue.

In terms of biological role, polyketide synthase; part of the Pks2 gene cluster that mediates the formation of infectious structures (appressoria), enabling these fungi to kill insects faster. The product of the Pks2 gene cluster is different from the one of Pks1 and has still not been identified. The protein is Polyketide synthase 2 of Metarhizium acridum (strain CQMa 102).